Reading from the N-terminus, the 131-residue chain is Small ribosomal subunit protein bS6 (131 aa).

Residues glutamate 98–glutamate 131 are disordered. A compositionally biased stretch (basic and acidic residues) spans lysine 104–phenylalanine 116. Over residues threonine 120–glutamate 131 the composition is skewed to acidic residues.

This sequence belongs to the bacterial ribosomal protein bS6 family.

In terms of biological role, binds together with bS18 to 16S ribosomal RNA. The protein is Small ribosomal subunit protein bS6 of Salmonella dublin (strain CT_02021853).